A 138-amino-acid polypeptide reads, in one-letter code: Aspartate 1-decarboxylase (138 aa).

The active-site Schiff-base intermediate with substrate; via pyruvic acid is Ser-25. Position 25 is a pyruvic acid (Ser) (Ser-25). Thr-57 provides a ligand contact to substrate. The active-site Proton donor is Tyr-58. 73 to 75 provides a ligand contact to substrate; it reads GAA.

The protein belongs to the PanD family. Heterooctamer of four alpha and four beta subunits. It depends on pyruvate as a cofactor. Post-translationally, is synthesized initially as an inactive proenzyme, which is activated by self-cleavage at a specific serine bond to produce a beta-subunit with a hydroxyl group at its C-terminus and an alpha-subunit with a pyruvoyl group at its N-terminus.

Its subcellular location is the cytoplasm. It carries out the reaction L-aspartate + H(+) = beta-alanine + CO2. Its pathway is cofactor biosynthesis; (R)-pantothenate biosynthesis; beta-alanine from L-aspartate: step 1/1. Its function is as follows. Catalyzes the pyruvoyl-dependent decarboxylation of aspartate to produce beta-alanine. This chain is Aspartate 1-decarboxylase, found in Renibacterium salmoninarum (strain ATCC 33209 / DSM 20767 / JCM 11484 / NBRC 15589 / NCIMB 2235).